The primary structure comprises 446 residues: Nitrate/nitrite binding protein NrtA (446 aa).

A signal peptide spans 1-28 (MSNFSRSTRRKFMFTAGAAAIGGVVLHG). A lipid anchor (N-palmitoyl cysteine) is attached at C29. C29 is lipidated: S-diacylglycerol cysteine. Positions 102, 155, 196, 240, and 269 each coordinate nitrate.

Belongs to the CmpA/NrtA family. As to quaternary structure, the complex is composed of two ATP-binding proteins (NrtC and NrtD), two transmembrane proteins (NrtB) and a solute-binding protein (NrtA).

The protein localises to the cell inner membrane. Its function is as follows. Part of the ABC transporter complex NrtABCD involved in nitrate uptake. The complex is probably also involved in nitrite transport. NrtA is the substrate-binding protein. Binds nitrate. The protein is Nitrate/nitrite binding protein NrtA of Synechocystis sp. (strain ATCC 27184 / PCC 6803 / Kazusa).